A 475-amino-acid polypeptide reads, in one-letter code: MRSEILASAFLGLAVRSIISLYSYSGFDSPPMHGDYEAQRHWQEITVNLAVGEWYTNSSNNDLQYWGLDYPPLTAYHSYLVGRIGASIDPRFVELHKSRGFESKEHKRFMRATVVSADVLIYLPAMLLLAYSLDKAFRSDDKLFLFTLVAAYPGQTLIDNGHFQYNNISLGFAAVAIAAILRRRFYAAAFFFTLALNYKQMELYHSLPFFAFLLGECVSQKSFASFIAEISRIAAVVLGTFAILWVPWLGSLQAVLQVLHRLFPVARGVFEDKVANVWCAVNVVWKLKKHISNDQMALVCIACTLIASLPTNVLLFRRRTNVGFLLALFNTSLAFFLFSFQVHEKTILLTALPALFLLKCWPDEMILFLEVTVFSMLPLLARDELLVPAVVATVAFHLIFKCFDSKSKLSNEYPLKYIANISQILMISVVVASLTVPAPTKYPDLWPLIISVTSCGHFFLFFLWGNVQQFSSKLS.

Transmembrane regions (helical) follow at residues 114–133 (VVSADVLIYLPAMLLLAYSL), 161–181 (GHFQYNNISLGFAAVAIAAIL), 235–255 (AVVLGTFAILWVPWLGSLQAV), 296–316 (MALVCIACTLIASLPTNVLLF), 322–342 (VGFLLALFNTSLAFFLFSFQV), 385–405 (LLVPAVVATVAFHLIFKCFDS), 418–438 (IANISQILMISVVVASLTVPA), and 441–461 (KYPDLWPLIISVTSCGHFFLF).

The protein belongs to the ALG6/ALG8 glucosyltransferase family.

It localises to the endoplasmic reticulum membrane. The catalysed reaction is an alpha-D-Man-(1-&gt;2)-alpha-D-Man-(1-&gt;2)-alpha-D-Man-(1-&gt;3)-[alpha-D-Man-(1-&gt;2)-alpha-D-Man-(1-&gt;3)-[alpha-D-Man-(1-&gt;2)-alpha-D-Man-(1-&gt;6)]-alpha-D-Man-(1-&gt;6)]-beta-D-Man-(1-&gt;4)-beta-D-GlcNAc-(1-&gt;4)-alpha-D-GlcNAc-diphospho-di-trans,poly-cis-dolichol + a di-trans,poly-cis-dolichyl beta-D-glucosyl phosphate = an alpha-D-Glc-(1-&gt;3)-alpha-D-Man-(1-&gt;2)-alpha-D-Man-(1-&gt;2)-alpha-D-Man-(1-&gt;3)-[alpha-D-Man-(1-&gt;2)-alpha-D-Man-(1-&gt;3)-[alpha-D-Man-(1-&gt;2)-alpha-D-Man-(1-&gt;6)]-alpha-D-Man-(1-&gt;6)]-beta-D-Man-(1-&gt;4)-beta-D-GlcNAc-(1-&gt;4)-alpha-D-GlcNAc-diphospho-di-trans,poly-cis-dolichol + a di-trans,poly-cis-dolichyl phosphate + H(+). It participates in protein modification; protein glycosylation. In terms of biological role, adds the first glucose residue to the lipid-linked oligosaccharide precursor for N-linked glycosylation. Transfers glucose from dolichyl phosphate glucose (Dol-P-Glc) onto the lipid-linked oligosaccharide Man(9)GlcNAc(2)-PP-Dol. Involved in cuticle differentiation. The polypeptide is Probable dolichyl pyrophosphate Man9GlcNAc2 alpha-1,3-glucosyltransferase (gny) (Drosophila melanogaster (Fruit fly)).